The following is a 279-amino-acid chain: Beta-lactamase (279 aa).

The first 21 residues, Met-1–Ala-21, serve as a signal peptide directing secretion. Ser-66 (acyl-ester intermediate) is an active-site residue. A disulfide bridge connects residues Cys-73 and Cys-119. Lys-230–Gly-232 contributes to the substrate binding site.

This sequence belongs to the class-A beta-lactamase family.

The catalysed reaction is a beta-lactam + H2O = a substituted beta-amino acid. This chain is Beta-lactamase, found in Klebsiella pneumoniae.